The sequence spans 488 residues: 3-octaprenyl-4-hydroxybenzoate carboxy-lyase (488 aa).

Asn172 lines the Mn(2+) pocket. Prenylated FMN-binding positions include Ile175–Arg177, Arg189–Leu191, and Arg194–Gly195. Glu238 contacts Mn(2+). The active-site Proton donor is the Asp287.

It belongs to the UbiD family. Homohexamer. Requires prenylated FMN as cofactor. The cofactor is Mn(2+).

It is found in the cell membrane. The catalysed reaction is a 4-hydroxy-3-(all-trans-polyprenyl)benzoate + H(+) = a 2-(all-trans-polyprenyl)phenol + CO2. The protein operates within cofactor biosynthesis; ubiquinone biosynthesis. Functionally, catalyzes the decarboxylation of 3-octaprenyl-4-hydroxy benzoate to 2-octaprenylphenol, an intermediate step in ubiquinone biosynthesis. This Ectopseudomonas mendocina (strain ymp) (Pseudomonas mendocina) protein is 3-octaprenyl-4-hydroxybenzoate carboxy-lyase.